We begin with the raw amino-acid sequence, 234 residues long: 2-amino-5-formylamino-6-ribosylaminopyrimidin-4(3H)-one 5'-monophosphate deformylase (234 aa).

Fe cation is bound by residues Glu30, His32, Asp41, and His111.

The protein belongs to the creatininase superfamily. FAPy deformylase family. As to quaternary structure, homodimer. The cofactor is Fe(2+). Zn(2+) serves as cofactor.

The enzyme catalyses 2-amino-5-formylamino-6-(5-phospho-D-ribosylamino)pyrimidin-4(3H)-one + H2O = 2,5-diamino-6-(1-D-ribosylamino)pyrimidin-4(3H)-one 5'-phosphate + formate + H(+). It participates in cofactor biosynthesis; coenzyme F420 biosynthesis. Its pathway is cofactor biosynthesis; riboflavin biosynthesis. Functionally, catalyzes the hydrolysis of the formamide of 2-amino-5-formylamino-6-ribosylamino-4(3H)-pyrimidinone 5'-monophosphate (FAPy) to form 2,5-diamino-6-ribosylamino-4(3H)-pyrimidinone 5'-phosphate (APy). This is 2-amino-5-formylamino-6-ribosylaminopyrimidin-4(3H)-one 5'-monophosphate deformylase from Methanothermobacter thermautotrophicus (strain ATCC 29096 / DSM 1053 / JCM 10044 / NBRC 100330 / Delta H) (Methanobacterium thermoautotrophicum).